We begin with the raw amino-acid sequence, 188 residues long: MTEARHQVNFITGNANKLSEVKAILEPAISVTNQSLDLVEIQGTLEEVTIDKCRRAAELVGGPVLVEDTCLCFDALQDLPGPYIKWFLGSIGHEGLNNMLLAYEDKGAKAVCTFGYSAGPGHEPILFQGITHGKIVPARGPSNFGWDPIFEYEGKTYAEMDKAEKNKISHRSRALAKLQEWFAKEMTA.

Position 12–17 (12–17 (TGNANK)) interacts with ITP. Glutamate 40 is a Mg(2+) binding site. ITP contacts are provided by residues lysine 52, 68–69 (DT), lysine 85, 144–147 (FGWD), lysine 165, and 170–171 (HR).

The protein belongs to the HAM1 NTPase family. Homodimer. Mg(2+) is required as a cofactor. The cofactor is Mn(2+).

It localises to the cytoplasm. The protein localises to the nucleus. The catalysed reaction is ITP + H2O = IMP + diphosphate + H(+). The enzyme catalyses dITP + H2O = dIMP + diphosphate + H(+). It carries out the reaction XTP + H2O = XMP + diphosphate + H(+). In terms of biological role, pyrophosphatase that hydrolyzes non-canonical purine nucleotides such as inosine triphosphate (ITP), deoxyinosine triphosphate (dITP) or xanthosine 5'-triphosphate (XTP) to their respective monophosphate derivatives. The enzyme does not distinguish between the deoxy- and ribose forms. Probably excludes non-canonical purines from RNA and DNA precursor pools, thus preventing their incorporation into RNA and DNA and avoiding chromosomal lesions. The chain is Inosine triphosphate pyrophosphatase from Podospora anserina (strain S / ATCC MYA-4624 / DSM 980 / FGSC 10383) (Pleurage anserina).